Reading from the N-terminus, the 366-residue chain is Peroxisomal (S)-2-hydroxy-acid oxidase GLO4 (366 aa).

One can recognise an FMN hydroxy acid dehydrogenase domain in the interval 1–360 (MEDNLPVNVR…TRSHVMTEGD (360 aa)). Tyr27 serves as a coordination point for a 2-oxocarboxylate. FMN is bound by residues 80-82 (PTG), Ser109, 130-132 (QLY), and Thr158. Tyr132 contacts a 2-oxocarboxylate. Arg167 is a binding site for a 2-oxocarboxylate. FMN is bound by residues Lys231 and Ser253. His255 acts as the Proton acceptor in catalysis. Residue Arg258 coordinates a 2-oxocarboxylate. FMN-binding positions include 286–290 (DGGIR) and 309–310 (GR). The Microbody targeting signal motif lies at 364–366 (SLL).

It belongs to the FMN-dependent alpha-hydroxy acid dehydrogenase family. Homotetramer. Binds to CATB and CATC; these interactions are disturbed by alpha-hydroxy-2-pyridinemethanesulfonic acid (HPMS) and salicylic acid (SA). FMN is required as a cofactor.

The protein localises to the peroxisome. The catalysed reaction is a (2S)-2-hydroxycarboxylate + O2 = a 2-oxocarboxylate + H2O2. It participates in lipid metabolism; fatty acid metabolism. Functionally, oxidase that catalyzes the oxidation of a broad range of 2-hydroxyacids to the corresponding 2-oxoacids, with a reduction of O2 to H2O2. May be involved in a general medium- and long-chain fatty acid catabolic pathway such as alpha-oxidation. In Oryza sativa subsp. japonica (Rice), this protein is Peroxisomal (S)-2-hydroxy-acid oxidase GLO4 (GLO4).